We begin with the raw amino-acid sequence, 83 residues long: Toxin BmKBT (83 aa).

Positions 1–19 (MKAALLLVIFSLMLIGVLT) are cleaved as a signal peptide. The region spanning 21-81 (KSGYPTDHEG…TWSRATNKCR (61 aa)) is the LCN-type CS-alpha/beta domain. Disulfide bonds link cysteine 31/cysteine 80, cysteine 35/cysteine 54, cysteine 41/cysteine 61, and cysteine 45/cysteine 63. Position 83 (lysine 83) is a propeptide, removed by a carboxypeptidase.

The protein belongs to the long (4 C-C) scorpion toxin superfamily. Sodium channel inhibitor family. Beta subfamily. Expressed by the venom gland.

Its subcellular location is the secreted. In terms of biological role, this toxin increases the peak sodium current, slows down the inactivation of sodium channels (Nav), and prolongs the action potential of dorsal root ganglion neurons, which indicates that it behaves as a classical alpha-toxin. It binds to mammal brain and insect sodium channels, but with a different manner. This peptide may bind to a distinct receptor site on mammal brain sodium channels, which is unconnected with that for BmKAS (a beta-toxin), BmKIT2 (a beta-toxin) or BmK I (an alpha toxin). In contrast, the receptor site for BmKabT on insect sodium channels might be closely related to that for the beta-insect depressant toxin BmKIT2. Possesses potent toxicity in mice but induces only paralysis in cotton bollworm. In Olivierus martensii (Manchurian scorpion), this protein is Toxin BmKBT.